Here is a 336-residue protein sequence, read N- to C-terminus: UPF0324 membrane protein PM1461 (336 aa).

10 helical membrane-spanning segments follow: residues 5-23, 30-52, 62-84, 91-113, 123-140, 153-175, 221-238, 250-271, 275-297, and 310-332; these read TLFLGLVFIGILTFLVNLL, LNANLSALTIAILLGILFGNTFY, GVIFAKGTLLRLGIILYGFRLTL, GINAIATDTIMLISTFLLTLWLG, IVYLTAGGCSICGAAAIM, VSIAVAVIVIFGTISMFLYPLMY, MIRVMMLAPFLLLVSWLL, ISIPWFAFLFILMAVINSFSLI, IVAWIVEIDSLLLIAAMTALGLT, and PLILGALVLCWLVIGGFFVNVGI.

Belongs to the UPF0324 family.

It is found in the cell membrane. In Pasteurella multocida (strain Pm70), this protein is UPF0324 membrane protein PM1461.